The sequence spans 246 residues: Adenosylcobinamide-GDP ribazoletransferase (246 aa).

7 helical membrane passes run 30-50 (VNWY…VHQA), 51-71 (GLVL…WVYV), 105-125 (VGAM…GAVA), 131-151 (GWGS…LLSI), 167-189 (ISSG…AGWY), 193-210 (LQVM…LWFS), and 226-246 (GAVI…SWWL).

The protein belongs to the CobS family. Requires Mg(2+) as cofactor.

The protein localises to the cell membrane. The enzyme catalyses alpha-ribazole + adenosylcob(III)inamide-GDP = adenosylcob(III)alamin + GMP + H(+). The catalysed reaction is alpha-ribazole 5'-phosphate + adenosylcob(III)inamide-GDP = adenosylcob(III)alamin 5'-phosphate + GMP + H(+). It participates in cofactor biosynthesis; adenosylcobalamin biosynthesis; adenosylcobalamin from cob(II)yrinate a,c-diamide: step 7/7. Functionally, joins adenosylcobinamide-GDP and alpha-ribazole to generate adenosylcobalamin (Ado-cobalamin). Also synthesizes adenosylcobalamin 5'-phosphate from adenosylcobinamide-GDP and alpha-ribazole 5'-phosphate. The sequence is that of Adenosylcobinamide-GDP ribazoletransferase from Brevibacillus brevis (strain 47 / JCM 6285 / NBRC 100599).